We begin with the raw amino-acid sequence, 187 residues long: Ribosome maturation factor RimM (187 aa).

Positions 95 to 178 (DEDEFFYADL…GLVEDKDESL (84 aa)) constitute a PRC barrel domain.

This sequence belongs to the RimM family. As to quaternary structure, binds ribosomal protein uS19.

It localises to the cytoplasm. An accessory protein needed during the final step in the assembly of 30S ribosomal subunit, possibly for assembly of the head region. Essential for efficient processing of 16S rRNA. May be needed both before and after RbfA during the maturation of 16S rRNA. It has affinity for free ribosomal 30S subunits but not for 70S ribosomes. The chain is Ribosome maturation factor RimM from Sinorhizobium fredii (strain NBRC 101917 / NGR234).